A 667-amino-acid chain; its full sequence is Serine/threonine-protein kinase BUR1 (667 aa).

In terms of domain architecture, Protein kinase spans 60–378 (YKEEEKLGQG…AMSAMKHPFF (319 aa)). Residues 66-74 (LGQGTFGEV) and lysine 89 contribute to the ATP site. Aspartate 207 serves as the catalytic Proton acceptor. Positions 408-667 (HEAMSQKGPS…SEQKDIADLY (260 aa)) are disordered. A compositionally biased stretch (basic and acidic residues) spans 432-443 (KFEKKSGIKREQ). Residues 494-516 (NNHSGSLRNRITPSNMGTHSNPR) show a composition bias toward polar residues. A compositionally biased stretch (low complexity) spans 541 to 556 (YNRGYSSSVNSRYNNR). Composition is skewed to polar residues over residues 582-594 (DNNQ…QGHS), 602-611 (SKYNSTQTNI), and 622-632 (NEYNASKLGSQ). A compositionally biased stretch (basic and acidic residues) spans 633–667 (DTKKNDYPKHSETQKQQNNEEKKIHSEQKDIADLY).

This sequence belongs to the protein kinase superfamily. CMGC Ser/Thr protein kinase family. CDC2/CDKX subfamily.

The protein localises to the nucleus. The catalysed reaction is L-seryl-[protein] + ATP = O-phospho-L-seryl-[protein] + ADP + H(+). The enzyme catalyses L-threonyl-[protein] + ATP = O-phospho-L-threonyl-[protein] + ADP + H(+). It catalyses the reaction [DNA-directed RNA polymerase] + ATP = phospho-[DNA-directed RNA polymerase] + ADP + H(+). Its function is as follows. Serine/threonine-protein kinase involved in transcription regulation. Phosphorylates the UBC2/RAD6 ubiquitin-conjugating enzyme (E2), leading to monoubiquitination of histone H2B and the silencing of telomeric-associated genes. Also required for histone H3 methylation. Necessary for the recovery from pheromone-induced growth arrest in the cell cycle G1 phase. This Candida glabrata (strain ATCC 2001 / BCRC 20586 / JCM 3761 / NBRC 0622 / NRRL Y-65 / CBS 138) (Yeast) protein is Serine/threonine-protein kinase BUR1 (BUR1).